The primary structure comprises 20 residues: Tetracycline resistance leader peptide (20 aa).

In Bacillus cereus, this protein is Tetracycline resistance leader peptide (tetL).